The primary structure comprises 300 residues: Pantothenate synthetase (300 aa).

Residue 30–37 participates in ATP binding; that stretch reads MGYLHEGH. H37 (proton donor) is an active-site residue. Position 61 (Q61) interacts with (R)-pantoate. Q61 lines the beta-alanine pocket. 147-150 provides a ligand contact to ATP; the sequence is GMKD. A (R)-pantoate-binding site is contributed by Q153. ATP-binding positions include V176 and 184 to 187; that span reads KSSR.

This sequence belongs to the pantothenate synthetase family. In terms of assembly, homodimer.

The protein resides in the cytoplasm. It carries out the reaction (R)-pantoate + beta-alanine + ATP = (R)-pantothenate + AMP + diphosphate + H(+). It participates in cofactor biosynthesis; (R)-pantothenate biosynthesis; (R)-pantothenate from (R)-pantoate and beta-alanine: step 1/1. Functionally, catalyzes the condensation of pantoate with beta-alanine in an ATP-dependent reaction via a pantoyl-adenylate intermediate. This chain is Pantothenate synthetase, found in Geobacillus kaustophilus (strain HTA426).